The following is a 160-amino-acid chain: Ribosomal RNA large subunit methyltransferase H (160 aa).

S-adenosyl-L-methionine contacts are provided by residues Leu76, Gly108, and 127–132; that span reads LGKMTW.

Belongs to the RNA methyltransferase RlmH family. Homodimer.

Its subcellular location is the cytoplasm. It carries out the reaction pseudouridine(1915) in 23S rRNA + S-adenosyl-L-methionine = N(3)-methylpseudouridine(1915) in 23S rRNA + S-adenosyl-L-homocysteine + H(+). Specifically methylates the pseudouridine at position 1915 (m3Psi1915) in 23S rRNA. The polypeptide is Ribosomal RNA large subunit methyltransferase H (Rhizobium etli (strain CIAT 652)).